We begin with the raw amino-acid sequence, 457 residues long: Histidine--tRNA ligase (457 aa).

It belongs to the class-II aminoacyl-tRNA synthetase family. Homodimer.

The protein localises to the cytoplasm. It carries out the reaction tRNA(His) + L-histidine + ATP = L-histidyl-tRNA(His) + AMP + diphosphate + H(+). This chain is Histidine--tRNA ligase, found in Mesoplasma florum (strain ATCC 33453 / NBRC 100688 / NCTC 11704 / L1) (Acholeplasma florum).